The sequence spans 194 residues: MLPESFFLNDDVLYLAKELLGHSLVTQIEGKTTSGIIIETEAYRGPDDKACHAYNYRKTQRNLPMYSRGGIAYIYQCYGMHALFNVVTGSQNLPHAVLIRAIAPQKGEDIMIQRRQWQNKPKHLLTNGPGKVCQALNLTLEHNTQSLTSPQIHISQKKISGTITQTPRIGIDYAEEYRDLPWRFLLNIKKSKKI.

Belongs to the DNA glycosylase MPG family.

The polypeptide is Putative 3-methyladenine DNA glycosylase (Chlamydia felis (strain Fe/C-56) (Chlamydophila felis)).